Consider the following 310-residue polypeptide: Light-independent protochlorophyllide reductase iron-sulfur ATP-binding protein (310 aa).

Residues 53-58 (GIGKST) and Lys82 contribute to the ATP site. Ser57 is a binding site for Mg(2+). Residues Cys138 and Cys172 each coordinate [4Fe-4S] cluster. ATP contacts are provided by residues 223-224 (NR) and 247-249 (PAL).

This sequence belongs to the NifH/BchL/ChlL family. As to quaternary structure, homodimer. Protochlorophyllide reductase is composed of three subunits; BchL, BchN and BchB. [4Fe-4S] cluster is required as a cofactor.

The catalysed reaction is chlorophyllide a + oxidized 2[4Fe-4S]-[ferredoxin] + 2 ADP + 2 phosphate = protochlorophyllide a + reduced 2[4Fe-4S]-[ferredoxin] + 2 ATP + 2 H2O. The protein operates within porphyrin-containing compound metabolism; bacteriochlorophyll biosynthesis (light-independent). Its function is as follows. Component of the dark-operative protochlorophyllide reductase (DPOR) that uses Mg-ATP and reduced ferredoxin to reduce ring D of protochlorophyllide (Pchlide) to form chlorophyllide a (Chlide). This reaction is light-independent. The L component serves as a unique electron donor to the NB-component of the complex, and binds Mg-ATP. The chain is Light-independent protochlorophyllide reductase iron-sulfur ATP-binding protein from Rhodopseudomonas palustris (strain BisA53).